Reading from the N-terminus, the 1019-residue chain is MVLASFLVSGLVLGILAQQMRPVQSRGVDLGLCDETRFECKCGDPGYVFNVPMKQCTYFYRWRPYCKPCDDLEAKDICPKYKRCQECKAGLDSCVTCPPNKYGTWCSGECQCKNGGICDQRTGACTCRDRYEGAHCEILKGCPLLPSDSQVQEVRNPPDNPQTIDYSCSPGFKLKGVARISCLPNGQWSSFPPKCIRECAKVSSPEHGKVNAPSGNMIEGATLRFSCDSPYYLIGQETLTCQGNGQWSGQIPQCKKLVFCPDLDPVNHAEHQVKIGVEQKYGQFPQGTEVTYTCSGNYFLMGFNTLKCNPDGSWSGSQPSCVKVADREVDCDSKAVDFLDDVGEPVRIHCPAGCSLTAGTVWGTAIYHELSSVCRAAIHAGKLPNSGGAVHVVNNGPYSDFLGSDLNGIKSEELKSLARSFRFDYVSSSTAGRSGCPDGWFEVEENCVYVTSKQRAWERAQGVCTNMAARLAVLDKDLIPSSLTETLRGKGLTTTWIGLHRLDAEKPFVWELMDRSNVVLNDNLTFWASGEPGNETNCVYLDIRDQLQPVWKTKSCFQPSSFACMMDLSDRNKAKCDDPGPLENGHATLHGQSIDGFYAGSSIRYSCEVLHYLSGTETVTCTTNGTWSAPKPRCIKVITCQNPPVPSYGSVEIKPPSRTNSISRVGSPFLRLPRLPLPLARAAKPPPKPRSSQPSTVDLASKVKLPEGHYRVGSRAIYTCESRYYELLGSQGRRCDSNGNWSGRPASCIPVCGRSDSPRSPFIWNGNSTEIGQWPWQAGISRWLADHNMWFLQCGGSLLNEKWIVTAAHCVTYSATAEIIDPSQFKIYLGKYYRDDSRDDDYVQVREALEIHVNPNYDPGNLNFDIALIQLKTPVTLTTRVQPICLPTDITTREHLKEGTLAVVTGWGLNENNTYSEMIQQAVLPVVAASTCEEGYKEADLPLTVTENMFCAGYKKGRYDACSGDSGGPLVFADDSRTERRWVLEGIVSWGSPSGCGKANQYGGFTKVNVFLSWIRQFI.

A signal peptide spans 1-25 (MVLASFLVSGLVLGILAQQMRPVQS). The EGF-like domain occupies 102–137 (YGTWCSGECQCKNGGICDQRTGACTCRDRYEGAHCE). 16 disulfide bridges follow: Cys110–Cys118, Cys112–Cys125, Cys127–Cys136, Cys142–Cys182, Cys168–Cys195, Cys199–Cys241, Cys227–Cys254, Cys260–Cys308, Cys294–Cys321, Cys331–Cys350, Cys354–Cys374, Cys464–Cys564, Cys538–Cys556, Cys576–Cys621, Cys607–Cys634, and Cys720–Cys748. Sushi domains lie at 140 to 197 (KGCP…KCIR), 198 to 256 (ECAK…QCKK), and 258 to 323 (VFCP…SCVK). The 97-residue stretch at 325–421 (ADREVDCDSK…EELKSLARSF (97 aa)) folds into the LCCL domain. A C-type lectin domain is found at 436 to 568 (CPDGWFEVEE…PSSFACMMDL (133 aa)). 2 N-linked (GlcNAc...) asparagine glycosylation sites follow: Asn523 and Asn534. 2 Sushi domains span residues 574–636 (AKCD…RCIK) and 689–750 (PRSS…SCIP). N-linked (GlcNAc...) asparagine glycosylation is found at Asn624, Asn740, and Asn767. Positions 763–1019 (IWNGNSTEIG…VFLSWIRQFI (257 aa)) constitute a Peptidase S1 domain. A disulfide bond links Cys794 and Cys810. Residues His809 and Asp865 each act as charge relay system in the active site. A glycan (N-linked (GlcNAc...) asparagine) is linked at Asn912. A disulfide bond links Cys932 and Cys951. Asp960 is a substrate binding site. Cys962 and Cys996 are oxidised to a cystine. Catalysis depends on Ser966, which acts as the Charge relay system.

Belongs to the peptidase S1 family. As to quaternary structure, heterodimer of a light chain and a heavy chain linked by a disulfide bond. Forms a covalent heterodimer with intracellular coagulation inhibitor 1/LICI-1. Forms a covalent heterodimer with intracellular coagulation inhibitor 2/LICI-2. In terms of processing, N-glycosylated. Post-translationally, lipopolysaccharide (LPS) activates clotting factor C by inducing the proteolytic cleavage of the clotting factor C light chain into clotting factor C chains A and B. Clotting factor C chains heavy, A and B remain associated via interchain disulfide bonds. As to expression, expressed in hemocytes (at protein level).

The protein localises to the secreted. The enzyme catalyses Selective cleavage of 103-Arg-|-Ser-104 and 124-Ile-|-Ile-125 bonds in Limulus clotting factor B to form activated factor B. Cleavage of -Pro-Arg-|-Xaa- bonds in synthetic substrates.. With respect to regulation, activated by Gram-negative bacterial lipopolysaccharides. Inhibited by intracellular coagulation inhibitor 1/LICI-1 and to a lesser extent by intracellular coagulation inhibitors 2/LICI-2 and 3/LICI-3. Inhibited by the small molecule diisopropyl fluorophosphate (DFP). Functionally, this enzyme is closely associated with an endotoxin-sensitive hemolymph coagulation system which may play important roles in both hemostasis and host defense mechanisms. Its active form catalyzes the activation of clotting factor B. This is Clotting factor C from Tachypleus tridentatus (Japanese horseshoe crab).